The chain runs to 510 residues: NAD(P)H-quinone oxidoreductase subunit 2 B, chloroplastic (510 aa).

14 helical membrane-spanning segments follow: residues 31–51, 59–79, 99–119, 124–144, 149–169, 184–204, 229–249, 261–281, 295–315, 323–343, 354–374, 395–415, 418–438, and 484–504; these read FIFPECILIFGLILLLMIDLT, WFYFISSTSLVISITALLFRW, IFQFLILLCSTLCIPLSVEYI, MAITEFLLFVLTATLGGMFLC, LITIFVALECFSLCSYLLSGY, LLMGGASSSILVYGFSWLYGL, ISIALIFITVGLGFKLSLAPF, PTPVVAFLSVTSKVAALALAT, WHLLLEILAILSMILGNLLAI, MLAYSSIGQIGYVIIGIIVGD, YMLFYISMNLGTFACIVLFGL, ALSLALCLLSLGGLPPLAGFF, LYLFWCGWQAGLYFLVSIGLL, and MTVCVIASTILGISMNPILAI.

It belongs to the complex I subunit 2 family. As to quaternary structure, NDH is composed of at least 16 different subunits, 5 of which are encoded in the nucleus.

It localises to the plastid. The protein localises to the chloroplast thylakoid membrane. The catalysed reaction is a plastoquinone + NADH + (n+1) H(+)(in) = a plastoquinol + NAD(+) + n H(+)(out). The enzyme catalyses a plastoquinone + NADPH + (n+1) H(+)(in) = a plastoquinol + NADP(+) + n H(+)(out). Its function is as follows. NDH shuttles electrons from NAD(P)H:plastoquinone, via FMN and iron-sulfur (Fe-S) centers, to quinones in the photosynthetic chain and possibly in a chloroplast respiratory chain. The immediate electron acceptor for the enzyme in this species is believed to be plastoquinone. Couples the redox reaction to proton translocation, and thus conserves the redox energy in a proton gradient. The protein is NAD(P)H-quinone oxidoreductase subunit 2 B, chloroplastic of Hordeum vulgare (Barley).